A 548-amino-acid polypeptide reads, in one-letter code: MPVPGDDMGETPLTRTPIPMPAYFSQAEQSFSLKKRGRSLCYTLPPRPPVKSALPVSRIFPNKQRSWSQPRPQSVSFRSPQNKTPASKLYDQSKGDTFFKQCFKSICKLGRGSFGEVYKVQSLEDGCFYAVKRSVSPFRGESDRQRKLQEVRKHERVGEHPNCLRFVRAWEEKRMLYLQTELCAGSLQQHSEEFAGSLPPRRVWNITCDLLHGLKHLHDRNLLHLDIKPANVFISFSGVCKLGDFGLMVELDGTEGSGEAQEGDPRYMAPELLDGIFSKAADVFSLGMSLLEVACNMELPKGGDGWQQLRQGHLPTEFTSDLPPDFLKVLSAMLEPDYRRRATVDWLLSLPAIRNAERWRMVTLAQERTLGKIIAVYQFIVWLLSFVFQWLNRPVIGFLHYCGLRALPRSPPCSPFPNHLGESSFSSDWDDESLGDDVFEVPPSPLATHRNLTYHGQELIGRHSPDLLSRPSLGSTSTPRNLSPEFSMRKRSALPLTPNVSRISQDSTGKSRSPSTSHSSSGFVDAEVQRTLFLPRNLLGMFDDATEQ.

The tract at residues 61 to 89 (PNKQRSWSQPRPQSVSFRSPQNKTPASKL) is disordered. The segment covering 63-85 (KQRSWSQPRPQSVSFRSPQNKTP) has biased composition (polar residues). One can recognise a Protein kinase domain in the interval 103-353 (FKSICKLGRG…VDWLLSLPAI (251 aa)). ATP is bound by residues 109 to 117 (LGRGSFGEV) and Lys-132. Asp-226 functions as the Proton acceptor in the catalytic mechanism. Positions 231, 244, and 246 each coordinate Mg(2+). A Membrane-association motif motif is present at residues 376-392 (VYQFIVWLLSFVFQWLN). The disordered stretch occupies residues 464–523 (SPDLLSRPSLGSTSTPRNLSPEFSMRKRSALPLTPNVSRISQDSTGKSRSPSTSHSSSGF). Polar residues predominate over residues 472–481 (SLGSTSTPRN). Thr-478 bears the Phosphothreonine; by CDK1 mark. The span at 507–521 (STGKSRSPSTSHSSS) shows a compositional bias: low complexity.

The protein belongs to the protein kinase superfamily. Ser/Thr protein kinase family. WEE1 subfamily. Interacts with CDC2-CCNB1 complex. Interacts with Mos during oocyte maturation. Post-translationally, autophosphorylated. Phosphorylated on undefined residues by RSK2 and Mos kinases. Phosphorylation at Thr-478 by cdk1 creates a docking site for plk1/plx1, leading to subsequent phosphorylation by plk1/plk1 and inhibition of the protein kinase activity kinase activity.

Its subcellular location is the endoplasmic reticulum membrane. The protein localises to the golgi apparatus membrane. The enzyme catalyses L-seryl-[protein] + ATP = O-phospho-L-seryl-[protein] + ADP + H(+). The catalysed reaction is L-threonyl-[protein] + ATP = O-phospho-L-threonyl-[protein] + ADP + H(+). With respect to regulation, negatively regulated by hyperphosphorylation during mitosis. The plk1/plk1 protein kinase may be required for mitotic phosphorylation. Inactivated during oocyte maturation by phosphorylation by RSK2 and Mos kinase. In terms of biological role, acts as a negative regulator of entry into mitosis (G2 to M transition) by phosphorylation of the CDK1 kinase specifically when CDK1 is complexed to cyclins. Mediates phosphorylation of CDK1 predominantly on 'Thr-14'. Also involved in Golgi fragmentation. May be involved in phosphorylation of CDK1 on 'Tyr-15' to a lesser degree, however tyrosine kinase activity is unclear and may be indirect. This Xenopus laevis (African clawed frog) protein is Membrane-associated tyrosine- and threonine-specific cdc2-inhibitory kinase (pkmyt1).